The primary structure comprises 349 residues: Histone-lysine N-methyltransferase ATXR6 (349 aa).

Residues 1-28 (MVAVRRRRTQASNPRSEPPQHMSDHDSD) are disordered. Residues 32-82 (DTVCEECSSGKQPAKLLLCDKCDKGFHLFCLRPILVSVPKGSWFCPSCSKH) form a PHD-type zinc finger. Positions 92–99 (QTKIIDFF) match the PIP motif motif. A disordered region spans residues 105–126 (PDSSQISSSSDSIGKKRKKTSL). Over residues 106–116 (DSSQISSSSDS) the composition is skewed to low complexity. M190 serves as a coordination point for substrate. An SET domain is found at 214-337 (PPLMVVFDPY…KGERLYYDYN (124 aa)). S-adenosyl-L-methionine-binding positions include 224–226 (EGF) and 287–291 (RFISG). Residues R309 and 339–340 (YE) each bind substrate. Residues Y343 and V349 each coordinate S-adenosyl-L-methionine.

It belongs to the class V-like SAM-binding methyltransferase superfamily. Histone-lysine methyltransferase family. TRX/MLL subfamily. Interacts with PCNA1 and PCNA2. Interacts (via PHD domain) with HTR1 (via N-terminus). Interacts with IPS1. As to expression, expressed in leaves, roots, stems, flowers and siliques. Up-regulated in tissues where cell division is active.

It is found in the nucleus. It catalyses the reaction L-lysyl(27)-[histone H3] + S-adenosyl-L-methionine = N(6)-methyl-L-lysyl(27)-[histone H3] + S-adenosyl-L-homocysteine + H(+). In terms of biological role, histone methyltransferase that specifically monomethylates 'Lys-27' of histone H3 (H3K27me1). Has higher activity on nucleosomes containing H3.1 than H3.3. Involved in the formation of constitutive heterochromatin and the silencing of heterochromatic elements. May act as a positive regulator of the G1-S transition. Influences which sets of rRNA gene variants are expressed or silenced. Up-regulated by E2FB. This Arabidopsis thaliana (Mouse-ear cress) protein is Histone-lysine N-methyltransferase ATXR6 (ATXR6).